The primary structure comprises 273 residues: Esterase pigG (273 aa).

Catalysis depends on charge relay system residues Ser122, Asp215, and His243.

Belongs to the LovG family.

It functions in the pathway secondary metabolite biosynthesis. Its function is as follows. Esterase; part of the gene cluster that mediates the biosynthesis of azaphilone pigments (MonAzPs), a complex mixture of compounds with a common azaphilone skeleton very widely used as food colorants. Within the pathway, pigG may assist the nrPKS pigA in the biosynthesis of the hexaketide precursor. The first step of the pathway is performed by the nrPKS pigA that forms the hexaketide precursor from successive condensations of five malonyl-CoA units, with a simple acetyl-CoA starter unit. The role of esterase pigG is not clear, but it may play at most a supplementary role in the formation of the benzaldehyde produced by the pigA nrPKS. This very reactive benzaldehyde is intercepted by the pigC ketoreductase that to provide the first stable enzyme-free MonAzPs intermediate, 6-(4-hydroxy-2-oxopentyl)-3-methyl-2,4-dioxocyclohexane carbaldehyde, also known as M7PKS-1. The FAD-dependent monooxygenase pigN hydroxylates M7PKS-1 at C-4, which triggers the formation of the pyran ring. PigJ, pigK and pigD are involved in the acetylation of the pyran ring. PigJ and pigK form the two subunits of a dedicated fungal FAS that produces the side chain fatty acyl moiety of MonAzPs and pigD transfers the fatty acyl chain to the C-4 alcohol. PigM and pigO are involved in the elimination of the omega-1 alcohol. PigM acts as an O-acetyltransferase that synthesizes the putative O-11 acetyl intermediate whereas pigO eliminates acetic acid to yield an intermediate with a C10(11) double bond. The dehydration of the C-11 alcohol followed by the reduction of the C6(7) double bond by the NAD(P)H-dependent oxidoreductase pigE increases the electrophilicity of the C-5 ketone of the resulting acyl benzopyran. This in turn sets up the C-5 ketone for an intramolecular Knoevenagel aldol condensation with the C-20 enol of the side chain. This condensation affords the characteristic linear tricyclic carbon skeletons of the yellow pigments that serve as the common precursors for the classical yellow pigments monascin and ankaflavin, orange pigments rubopunctatin and monascorubrin, and red pigments ribropunctamine and monascorubramine. The FAD-dependent oxidoreductase pigF is especially invoved in the biosynthesis of orange and red pigments via desaturation of C6(7). The sequence is that of Esterase pigG from Monascus ruber (Mold).